The primary structure comprises 202 residues: Complement component C8 gamma chain (202 aa).

The first 20 residues, 1 to 20 (MLPPGTATLLTLLLAAGSLG), serve as a signal peptide directing secretion. Pyrrolidone carboxylic acid is present on Gln-21. Residues Cys-96 and Cys-188 are joined by a disulfide bond.

It belongs to the calycin superfamily. Lipocalin family. Heterotrimer of 3 chains: alpha (C8A), beta (C8B) and gamma (C8G); the alpha and gamma chains are disulfide bonded. Component of the membrane attack complex (MAC), composed of complement C5b, C6, C7, C8A, C8B, C8G and multiple copies of the pore-forming subunit C9.

It is found in the secreted. The protein resides in the target cell membrane. Its activity is regulated as follows. Membrane attack complex (MAC) assembly is inhibited by CD59, thereby protecting self-cells from damage during complement activation. MAC assembly is also inhibited by clusterin (CLU) chaperones that inhibit polymerization of C9. Functionally, component of the membrane attack complex (MAC), a multiprotein complex activated by the complement cascade, which inserts into a target cell membrane and forms a pore, leading to target cell membrane rupture and cell lysis. The MAC is initiated by proteolytic cleavage of C5 into complement C5b in response to the classical, alternative, lectin and GZMK complement pathways. The complement pathways consist in a cascade of proteins that leads to phagocytosis and breakdown of pathogens and signaling that strengthens the adaptive immune system. C8G, together with C8A and C8B, inserts into the target membrane, but does not form pores by itself. During MAC assembly, associates with C5b, C6 and C7 to form the C5b8 intermediate complex that inserts into the target membrane and traverses the bilayer increasing membrane rigidity. The chain is Complement component C8 gamma chain from Homo sapiens (Human).